A 217-amino-acid chain; its full sequence is Large ribosomal subunit protein uL3 (217 aa).

It belongs to the universal ribosomal protein uL3 family. Part of the 50S ribosomal subunit. Forms a cluster with proteins L14 and L19.

In terms of biological role, one of the primary rRNA binding proteins, it binds directly near the 3'-end of the 23S rRNA, where it nucleates assembly of the 50S subunit. The chain is Large ribosomal subunit protein uL3 from Mycobacterium sp. (strain KMS).